Here is a 258-residue protein sequence, read N- to C-terminus: Chemokine-binding protein (258 aa).

Residues 1-17 (MKQYIVLACMCLAAAAM) form the signal peptide. Residues 65–93 (TEITESESDPDPEVESEDDSTSVEDVDPP) are disordered. Residues 68 to 91 (TESESDPDPEVESEDDSTSVEDVD) are compositionally biased toward acidic residues.

It belongs to the orthopoxvirus OPG001 family. Binds to host CC chemokines, such as RANTES/CCL5, MIP-1alpha/CCL3, MCP-1/CCL2 and eotaxin.

It localises to the secreted. Functionally, inhibits host immune defense by binding to host chemokines. Binds host CC chemokines (beta chemokines) such as RANTES with high affinity, but not CXC or C chemokines (alpha and gamma chemokines). The protein is Chemokine-binding protein (OPG001) of Homo sapiens (Human).